We begin with the raw amino-acid sequence, 37 residues long: MVETLLSGIILGLIPITICGLFFTAYLQYMRSGNSFY.

The helical transmembrane segment at 5-25 threads the bilayer; that stretch reads LLSGIILGLIPITICGLFFTA.

This sequence belongs to the PetG family. As to quaternary structure, the 4 large subunits of the cytochrome b6-f complex are cytochrome b6, subunit IV (17 kDa polypeptide, PetD), cytochrome f and the Rieske protein, while the 4 small subunits are PetG, PetL, PetM and PetN. The complex functions as a dimer.

Its subcellular location is the plastid. The protein localises to the chloroplast thylakoid membrane. Component of the cytochrome b6-f complex, which mediates electron transfer between photosystem II (PSII) and photosystem I (PSI), cyclic electron flow around PSI, and state transitions. PetG is required for either the stability or assembly of the cytochrome b6-f complex. This chain is Cytochrome b6-f complex subunit 5, found in Euglena gracilis.